A 184-amino-acid chain; its full sequence is GTP cyclohydrolase 1 (184 aa).

Residues C74, H77, and C145 each coordinate Zn(2+).

Belongs to the GTP cyclohydrolase I family. Toroid-shaped homodecamer, composed of two pentamers of five dimers.

It carries out the reaction GTP + H2O = 7,8-dihydroneopterin 3'-triphosphate + formate + H(+). It participates in cofactor biosynthesis; 7,8-dihydroneopterin triphosphate biosynthesis; 7,8-dihydroneopterin triphosphate from GTP: step 1/1. This chain is GTP cyclohydrolase 1 (folE), found in Aquifex aeolicus (strain VF5).